We begin with the raw amino-acid sequence, 216 residues long: Probable transaldolase (216 aa).

Lysine 83 functions as the Schiff-base intermediate with substrate in the catalytic mechanism.

It belongs to the transaldolase family. Type 3B subfamily.

Its subcellular location is the cytoplasm. The catalysed reaction is D-sedoheptulose 7-phosphate + D-glyceraldehyde 3-phosphate = D-erythrose 4-phosphate + beta-D-fructose 6-phosphate. It participates in carbohydrate degradation; pentose phosphate pathway; D-glyceraldehyde 3-phosphate and beta-D-fructose 6-phosphate from D-ribose 5-phosphate and D-xylulose 5-phosphate (non-oxidative stage): step 2/3. Its function is as follows. Transaldolase is important for the balance of metabolites in the pentose-phosphate pathway. This Clostridioides difficile (strain 630) (Peptoclostridium difficile) protein is Probable transaldolase.